We begin with the raw amino-acid sequence, 410 residues long: 23S rRNA (uracil(747)-C(5))-methyltransferase (410 aa).

The [4Fe-4S] cluster site is built by C61, C67, C70, and C137. Residues Q253, Y279, E300, and D341 each coordinate S-adenosyl-L-methionine. Residue C367 is the Nucleophile of the active site.

It belongs to the class I-like SAM-binding methyltransferase superfamily. RNA M5U methyltransferase family.

The enzyme catalyses uridine(747) in 23S rRNA + S-adenosyl-L-methionine = 5-methyluridine(747) in 23S rRNA + S-adenosyl-L-homocysteine + H(+). Activated by magnesium ions. Catalyzes the formation of 5-methyl-uridine at position equivalent to 747 (m5U747) in 23S rRNA (m5U859 in the P.abyssi numbering). This Pyrococcus abyssi (strain GE5 / Orsay) protein is 23S rRNA (uracil(747)-C(5))-methyltransferase.